The primary structure comprises 992 residues: UPF0182 protein MT3285 (992 aa).

7 consecutive transmembrane segments (helical) span residues 17 to 39 (RILI…LIDA), 59 to 81 (LATR…FGGL), 113 to 135 (LVGI…SYWA), 169 to 191 (LMLS…AHYI), 212 to 229 (LVSL…AYWL), 255 to 277 (VLPA…FSAI), and 284 to 306 (IPAI…WPLI). Residues 906–938 (PTEAAVPPSPAANPPPPASGPQPPPVTAAPPVP) are disordered. Over residues 912–938 (PPSPAANPPPPASGPQPPPVTAAPPVP) the composition is skewed to pro residues.

The protein belongs to the UPF0182 family.

It is found in the cell membrane. The sequence is that of UPF0182 protein MT3285 from Mycobacterium tuberculosis (strain CDC 1551 / Oshkosh).